The primary structure comprises 273 residues: Putative pyruvate, phosphate dikinase regulatory protein (273 aa).

149–156 (GPSRTSKT) provides a ligand contact to ADP.

This sequence belongs to the pyruvate, phosphate/water dikinase regulatory protein family. PDRP subfamily.

The enzyme catalyses N(tele)-phospho-L-histidyl/L-threonyl-[pyruvate, phosphate dikinase] + ADP = N(tele)-phospho-L-histidyl/O-phospho-L-threonyl-[pyruvate, phosphate dikinase] + AMP + H(+). The catalysed reaction is N(tele)-phospho-L-histidyl/O-phospho-L-threonyl-[pyruvate, phosphate dikinase] + phosphate + H(+) = N(tele)-phospho-L-histidyl/L-threonyl-[pyruvate, phosphate dikinase] + diphosphate. In terms of biological role, bifunctional serine/threonine kinase and phosphorylase involved in the regulation of the pyruvate, phosphate dikinase (PPDK) by catalyzing its phosphorylation/dephosphorylation. This chain is Putative pyruvate, phosphate dikinase regulatory protein, found in Rickettsia bellii (strain OSU 85-389).